The primary structure comprises 227 residues: Terpene cyclase ltmB (227 aa).

Helical transmembrane passes span L20–I40, M51–P71, V76–A96, A113–M133, I135–G155, L173–W195, and L206–L226.

This sequence belongs to the paxB family.

The protein localises to the membrane. It participates in secondary metabolite biosynthesis. Terpene cyclase; part of the gene cluster that mediates the biosynthesis of lolitrems, indole-diterpene mycotoxins that are potent tremorgens in mammals, and are synthesized by clavicipitaceous fungal endophytes in association with their grass hosts. The geranylgeranyl diphosphate (GGPP) synthase ltmG is proposed to catalyze the first step in lolitrem biosynthesis. LtmG catalyzes a series of iterative condensations of isopentenyl diphosphate (IPP) with dimethylallyl diphosphate (DMAPP), geranyl diphosphate (GPP), and farnesyl diphosphate (FPP), to form GGPP. GGPP then condenses with indole-3-glycerol phosphate to form 3-geranylgeranylindole, an acyclic intermediate, to be incorporated into paxilline. Either ltmG or ltmC could be responsible for this step, as both are putative prenyl transferases. The FAD-dependent monooxygenase ltmM then catalyzes the epoxidation of the two terminal alkenes of the geranylgeranyl moiety, which is subsequently cyclized by ltmB, to paspaline. The cytochrome P450 monooxygenases ltmQ and ltmP can sequentially oxidize paspaline to terpendole E and terpendole F. Alternatively, ltmP converts paspaline to an intermediate which is oxidized by ltmQ to terpendole F. LtmF, ltmK, ltmE and ltmJ appear to be unique to the epichloe endophytes. The prenyltransferase ltmF is involved in the 27-hydroxyl-O-prenylation. The cytochrome P450 monooxygenase ltmK is required for the oxidative acetal ring formation. The multi-functional prenyltransferase ltmE is required for C20- and C21-prenylations of the indole ring of paspalanes and acts together with the cytochrome P450 monooxygenase ltmJ to yield lolitremanes by multiple oxidations and ring closures. The stereoisomer pairs of lolitriol and lolitrem N or lolitrem B and lolitrem F may be attributed to variations in the way in which ring closure can occur under the action of ltmJ. While the major product of this pathway is lolitrem B, the prenyl transferases and cytochrome P450 monooxygenases identified in this pathway have a remarkable versatility in their regio- and stereo-specificities to generate a diverse range of metabolites that are products of a metabolic grid rather than a linear pathway. The chain is Terpene cyclase ltmB from Epichloe festucae var. lolii (Neotyphodium lolii).